A 278-amino-acid chain; its full sequence is Thioredoxin-related transmembrane protein 1 (278 aa).

Positions 1 to 26 are cleaved as a signal peptide; it reads MAHLGRLMVPLAALVLLLWAVPGAHG. In terms of domain architecture, Thioredoxin spans 27 to 132; sequence RRNNVRVLTD…FINFVSDKEW (106 aa). The Extracellular portion of the chain corresponds to 27-181; sequence RRNNVRVLTD…DLGIPAWGSY (155 aa). Residues Cys-56 and Cys-59 each act as nucleophile in the active site. Cys-56 and Cys-59 are disulfide-bonded. Residues 182-202 form a helical membrane-spanning segment; sequence LVFAFATVLSGLLLGLCMIFV. The Cytoplasmic portion of the chain corresponds to 203-278; it reads ADCLCPSKRR…VGLPSATDTS (76 aa). S-palmitoyl cysteine attachment occurs at residues Cys-205 and Cys-207. The segment covering 217 to 226 has biased composition (polar residues); it reads QYAKKTSPEF. Residues 217–278 form a disordered region; sequence QYAKKTSPEF…VGLPSATDTS (62 aa). Residues 235–251 are compositionally biased toward acidic residues; sequence EEQEADEEDVSEEEAED. 2 positions are modified to phosphoserine: Ser-245 and Ser-278.

Interacts with ATP2A2. In terms of processing, palmitoylated; palmitoylation is required for localization to mitochondria-associated endoplasmic reticulum membrane (MAM).

It localises to the endoplasmic reticulum membrane. The protein resides in the mitochondrion membrane. Its subcellular location is the secreted. It catalyses the reaction Catalyzes the rearrangement of -S-S- bonds in proteins.. Its function is as follows. Thiredoxin domain-containing protein that participates in various redox reactions through the reversible oxidation of its active center dithiol to a disulfide and catalyze dithiol-disulfide exchange reactions. Acts as a key inhibitor of the alternative triglyceride biosynthesis pathway by inhibiting the activity of TMEM68/DIESL at the endoplasmic reticulum, thereby restricting accumulation of triacylglycerol. The alternative triglyceride biosynthesis pathway mediates formation of triacylglycerol from diacylglycerol and membrane phospholipids. Acts as a protein disulfide isomerase by catalyzing formation or reduction of disulfide bonds. Specifically mediates formation of disulfide bonds of transmembrane proteins at the endoplasmic reticulum membrane. Involved in ER-associated degradation (ERAD) via its protein disulfide isomerase activity by acting on folding-defective polypeptides at the endoplasmic reticulum membrane. Acts as a negative regulator of platelet aggregation following secretion in the extracellular space. Acts as a regulator of endoplasmic reticulum-mitochondria contact sites via its ability to regulate redox signals. Regulates endoplasmic reticulum-mitochondria Ca(2+) flux. The protein is Thioredoxin-related transmembrane protein 1 of Mus musculus (Mouse).